Here is a 210-residue protein sequence, read N- to C-terminus: Phosphate propanoyltransferase (210 aa).

26–28 (VSN) serves as a coordination point for CoA. 2 residues coordinate Zn(2+): histidine 30 and histidine 32. CoA-binding residues include lysine 71 and arginine 78. Residue arginine 84 participates in phosphate binding. Zn(2+) contacts are provided by glutamate 90, histidine 138, histidine 140, and histidine 186. Asparagine 193 contributes to the CoA binding site.

Belongs to the PduL family. Monomer, when purified in the absence of the encapsulation peptide (EP, residues 1-27). The EP may influence oligomerization. It depends on Zn(2+) as a cofactor.

It localises to the bacterial microcompartment. It carries out the reaction propanoyl-CoA + phosphate = propanoyl phosphate + CoA. It functions in the pathway polyol metabolism; 1,2-propanediol degradation. Involved in 1,2-propanediol (1,2-PD) utilization in the bacterial microcompartment (BMC) dedicated to 1,2-PD degradation by catalyzing the conversion of propanoyl-CoA to propanoyl-phosphate. Also able to catalyze the reverse reaction. Also has phosphate acetyltransferase activity to a lesser extent. Required for optimal growth on 1,2-PD when the BMC is intact. CoA is regenerated within the BMC (for use by PduP) via this enzyme, although there must also be cofactor transport across the BMC. Directly targeted to the BMC. Its function is as follows. The 1,2-PD-specific bacterial microcompartment (BMC) concentrates low levels of 1,2-PD catabolic enzymes, concentrates volatile reaction intermediates thus enhancing pathway flux and keeps the level of toxic, mutagenic propionaldehyde low. The chain is Phosphate propanoyltransferase from Salmonella typhimurium (strain LT2 / SGSC1412 / ATCC 700720).